The chain runs to 52 residues: Rubredoxin (52 aa).

The region spanning 1 to 51 is the Rubredoxin-like domain; sequence MDKYECSICGYIYDEAEGDDGNVAAGTKFADLPADWVCPTCGADKDAFVKM. Residues cysteine 6, cysteine 9, cysteine 38, and cysteine 41 each coordinate Fe cation.

Belongs to the rubredoxin family. Fe(3+) serves as cofactor.

Functionally, rubredoxin is a small nonheme, iron protein lacking acid-labile sulfide. Its single Fe, chelated to 4 Cys, functions as an electron acceptor and may also stabilize the conformation of the molecule. In Megasphaera elsdenii, this protein is Rubredoxin.